Consider the following 128-residue polypeptide: Cytochrome c-type biogenesis protein CcmE (128 aa).

At 1–8 (MQKRVRNR) the chain is on the cytoplasmic side. The helical; Signal-anchor for type II membrane protein transmembrane segment at 9 to 29 (LITIIICFCSAALGISIVLYN) threads the bilayer. Topologically, residues 30–128 (LEKNIVFFLP…KHDENYRPPS (99 aa)) are periplasmic. Residues His120 and Tyr124 each coordinate heme.

Belongs to the CcmE/CycJ family.

It localises to the cell inner membrane. Functionally, heme chaperone required for the biogenesis of c-type cytochromes. Transiently binds heme delivered by CcmC and transfers the heme to apo-cytochromes in a process facilitated by CcmF and CcmH. The chain is Cytochrome c-type biogenesis protein CcmE from Rickettsia felis (strain ATCC VR-1525 / URRWXCal2) (Rickettsia azadi).